The following is a 359-amino-acid chain: DNA replication and repair protein RecF (359 aa).

Residue 30-37 (GKNGIGKT) coordinates ATP.

It belongs to the RecF family.

The protein resides in the cytoplasm. Its function is as follows. The RecF protein is involved in DNA metabolism; it is required for DNA replication and normal SOS inducibility. RecF binds preferentially to single-stranded, linear DNA. It also seems to bind ATP. The protein is DNA replication and repair protein RecF of Flavobacterium johnsoniae (strain ATCC 17061 / DSM 2064 / JCM 8514 / BCRC 14874 / CCUG 350202 / NBRC 14942 / NCIMB 11054 / UW101) (Cytophaga johnsonae).